The chain runs to 138 residues: Large ribosomal subunit protein uL16 (138 aa).

This sequence belongs to the universal ribosomal protein uL16 family. Part of the 50S ribosomal subunit.

Binds 23S rRNA and is also seen to make contacts with the A and possibly P site tRNAs. This is Large ribosomal subunit protein uL16 from Anaeromyxobacter sp. (strain Fw109-5).